The following is a 375-amino-acid chain: Probable mitochondrial tRNA-specific 2-thiouridylase 1 (375 aa).

Residues 7-14 (GMSGGVDS) and methionine 33 each bind ATP. The interval 94-96 (VPD) is interaction with target base in tRNA. The active-site Nucleophile is cysteine 99. Cysteine 99 and cysteine 205 are oxidised to a cystine. Glycine 124 is an ATP binding site. The interaction with tRNA stretch occupies residues 154–156 (KDQ). The Cysteine persulfide intermediate role is filled by cysteine 205. An interaction with tRNA region spans residues 319-320 (QR).

This sequence belongs to the MnmA/TRMU family.

The protein resides in the mitochondrion. It carries out the reaction 5-taurinomethyluridine(34) in tRNA + S-sulfanyl-L-cysteinyl-[protein] + AH2 + ATP = 5-taurinomethyl-2-thiouridine(34) in tRNA + L-cysteinyl-[protein] + A + AMP + diphosphate + H(+). Functionally, catalyzes the 2-thiolation of uridine at the wobble position (U34) of mitochondrial tRNA(Lys), tRNA(Glu) and tRNA(Gln). Required for the formation of 5-taurinomethyl-2-thiouridine (tm5s2U) of mitochondrial tRNA(Lys), tRNA(Glu), and tRNA(Gln) at the wobble position. ATP is required to activate the C2 atom of the wobble base. This is Probable mitochondrial tRNA-specific 2-thiouridylase 1 from Caenorhabditis elegans.